The sequence spans 512 residues: Protein maph-9 (512 aa).

Disordered regions lie at residues 24–103 (ISRK…DDDF), 168–386 (DLSE…KNEK), and 481–512 (GNRL…RPFR). 2 stretches are compositionally biased toward low complexity: residues 30 to 39 (TTTTSSGSSG) and 78 to 95 (STLS…STAA). Residues 178 to 200 (TDHEDPSLTFRVDKELEQSESKK) are compositionally biased toward basic and acidic residues. Over residues 230–239 (PQTSANLSTK) the composition is skewed to polar residues. 2 stretches are compositionally biased toward basic and acidic residues: residues 260–302 (KPSD…RENS) and 310–386 (VQDH…KNEK). A coiled-coil region spans residues 267–429 (KEWLQKKERE…QLEESEKMTR (163 aa)). A compositionally biased stretch (polar residues) spans 502–512 (PGTTTSLRPFR).

As to expression, expressed in amphid and phasmid ciliated neurons.

The protein localises to the cell projection. The protein resides in the cilium. It localises to the cytoplasm. It is found in the cytoskeleton. Its subcellular location is the cilium axoneme. This Caenorhabditis elegans protein is Protein maph-9.